We begin with the raw amino-acid sequence, 329 residues long: UDP-glucose 4-epimerase (329 aa).

Residues 13-14 (YV), 33-38 (HNLSTG), 53-54 (DI), 76-80 (FAAFS), N95, T120, Y144, K148, and F172 each bind NAD(+). T120 and Y144 together coordinate substrate. The active-site Proton acceptor is Y144. Substrate is bound by residues N173, 190-191 (HL), 207-209 (SVY), R221, and 281-284 (RGRD).

This sequence belongs to the NAD(P)-dependent epimerase/dehydratase family. As to quaternary structure, homodimer. It depends on NAD(+) as a cofactor.

It carries out the reaction UDP-alpha-D-glucose = UDP-alpha-D-galactose. It functions in the pathway carbohydrate metabolism; galactose metabolism. In terms of biological role, involved in the metabolism of galactose. Catalyzes the conversion of UDP-galactose (UDP-Gal) to UDP-glucose (UDP-Glc) through a mechanism involving the transient reduction of NAD. The protein is UDP-glucose 4-epimerase (galE) of Streptomyces lividans.